We begin with the raw amino-acid sequence, 598 residues long: MPTISVGRDRLFAALGESYTQEKFEELCFSFGIELDDVTTEKAIIRKEKHIDEEADDDEEIIYKIEIPANRPDLLCLEGLAQSLRVFIEKQEIPTYTLADISKDKILQMNVKPETSKIRPFVVCAVLRGVTFDEARYNSFIDLQDKLHQNICRRRSLVAIGTHDLDTLQGPFTYEALPPTDINFVPLKQTKSFRADELIEFYKSDMKLKKFLHIIENSPVFPVLYDSKRTVLSLPPIINGAHSAITLQTKNVFIECTATDLTKAKIVLNTMVTTFSEFCARKFEIEPVEVTYDDGKSYIYPDLAVYDMEVPLSFITDSIGVSLKVEQVTSLLTRMQLQAEQAKSSDNQCAIKVHVPPSRSDVLHPCDVMEDVAIAYGFNNIPTRKPASIKPLTLNELTDLLRIEIAMCVYTEVVTWLLCSHKENFAMLNREDVNSAVIVGNPRSADFEAMRRALMPGLLKTVGHNNKYPKPIKIFEISDVVMLDESKDVGASNRRHLAALYCGATSGFELIHGLVDRIMEVMAIPFLTIHENNVPINEKDGYYVKLSQEPEFLPGRQASIIVRGKHIGNFGIVHPEVLNNFDIPDPCSYLELDIEAIL.

One can recognise a B5 domain in the interval 303–383 (LAVYDMEVPL…IAYGFNNIPT (81 aa)). Mg(2+) contacts are provided by Asp-361, Asp-367, Glu-370, and Asp-371.

Belongs to the phenylalanyl-tRNA synthetase beta subunit family. Type 2 subfamily. As to quaternary structure, tetramer of two alpha and two beta subunits. Mg(2+) is required as a cofactor.

Its subcellular location is the cytoplasm. It localises to the cytosol. It carries out the reaction tRNA(Phe) + L-phenylalanine + ATP = L-phenylalanyl-tRNA(Phe) + AMP + diphosphate + H(+). This Arabidopsis thaliana (Mouse-ear cress) protein is Phenylalanine--tRNA ligase beta subunit, cytoplasmic.